The chain runs to 82 residues: Large ribosomal subunit protein bL27 (82 aa).

The interval 1–21 is disordered; that stretch reads MAHKKGASSSRNGRDSNAKRL.

It belongs to the bacterial ribosomal protein bL27 family.

The sequence is that of Large ribosomal subunit protein bL27 from Tropheryma whipplei (strain Twist) (Whipple's bacillus).